The following is a 576-amino-acid chain: Zinc finger protein 791 (576 aa).

A KRAB domain is found at 4–90 (VAFKDVSVSF…AETFSPNLSV (87 aa)). 17 consecutive C2H2-type zinc fingers follow at residues 100-122 (YECTICGKVFMRLSSLTRHMRSH), 132-154 (YKCKECGKAFSYLKSFQRHERSH), 160-182 (YKCKQCGKTFIYHQPFQRHEQTH), 188-210 (YECKQCGKALSCSSSLRVHERIH), 216-238 (YECKQCGKAFSCSSSIRVHERTH), 244-266 (YACKECGKAFISHTSVLTHMITH), 272-294 (YKCKECGKAFIFPSFLRVHERIH), 300-322 (YTCKQCGKAFRCSTSIQIHERIH), 328-350 (YKCKECGKSFSARPAFRVHVRVH), 356-378 (YKCKECGKAFSRISYFRIHERTH), 384-406 (YECKKCGKTFNYPLDLQIHKRNH), 412-434 (YECKECAKTFISLENFRRHMITH), 440-462 (YKCRDCGKVFIFPSALRTHERTH), 468-490 (YECKQCGKAFSCSSYIRIHKRTH), 496-518 (YECKECGKAFIYPTSFQGHMRMH), 524-546 (YKCKECGKAFSLHSSFQRHTRIH), and 552-574 (LECKQCGKAFSLSTSLKKHMRMH).

The protein belongs to the krueppel C2H2-type zinc-finger protein family.

The protein localises to the nucleus. In terms of biological role, may be involved in transcriptional regulation. The chain is Zinc finger protein 791 (ZNF791) from Pongo abelii (Sumatran orangutan).